Reading from the N-terminus, the 214-residue chain is Large ribosomal subunit protein uL3 (214 aa).

Residues 134–153 (ATHGNSLSHRAPGSIGQNQT) form a disordered region. Q152 carries the N5-methylglutamine modification.

The protein belongs to the universal ribosomal protein uL3 family. As to quaternary structure, part of the 50S ribosomal subunit. Forms a cluster with proteins L14 and L19. Methylated by PrmB.

One of the primary rRNA binding proteins, it binds directly near the 3'-end of the 23S rRNA, where it nucleates assembly of the 50S subunit. The chain is Large ribosomal subunit protein uL3 from Buchnera aphidicola subsp. Baizongia pistaciae (strain Bp).